Consider the following 638-residue polypeptide: Exotoxin A (638 aa).

The signal sequence occupies residues 1 to 25 (MHLTPHWIPLVASLGLLAGGSFASA). The domain Ia (required for target cell recognition) stretch occupies residues 26 to 277 (AEEAFDLWNE…VISHRLHFPE (252 aa)). The interval 278-389 (GGSLAALTAH…TGNDEAGAAS (112 aa)) is II (required for translocation in target cell cytoplasm). Cysteine 290 and cysteine 312 are disulfide-bonded. A domain Ib region spans residues 390–429 (ADVVSLTCPVAAGECAGPADSGDALLERNYPTGAEFLGDG). Positions 430 to 638 (GDISFSTRGT…PGKPPREDLK (209 aa)) are III (required for ADP-ribosyl activity). NAD(+) contacts are provided by residues 465–467 (HGT), serine 474, 479–485 (GVRARSQ), and glutamate 578. Glutamate 578 is an active-site residue. The disordered stretch occupies residues 596 to 638 (IPTDPRNVGGDLDPSSIPDKEQAISALPDYASQPGKPPREDLK).

In terms of processing, the 8 cysteines participate in intrachain disulfide bonds.

The catalysed reaction is diphthamide-[translation elongation factor 2] + NAD(+) = N-(ADP-D-ribosyl)diphthamide-[translation elongation factor 2] + nicotinamide + H(+). Inhibited by 1,8-naphthalimide (NAP) as well as a number of poly(ADP-ribose) polymerase inhibitors and other compounds. An NAD-dependent ADP-ribosyltransferase (ADPRT). Catalyzes the transfer of the ADP ribosyl moiety of oxidized NAD (NAD(+)) onto eukaryotic elongation factor 2 (eEF-2) thus arresting protein synthesis. Has an LD(50) of 65 ng/ml against the human lung epithelial cell line C38. The sequence is that of Exotoxin A from Pseudomonas aeruginosa (strain ATCC 15692 / DSM 22644 / CIP 104116 / JCM 14847 / LMG 12228 / 1C / PRS 101 / PAO1).